The following is a 347-amino-acid chain: Autoinducer 2 import system permease protein LsrC (347 aa).

9 helical membrane-spanning segments follow: residues Leu14–Val34, Met39–Leu59, Gly72–Cys92, Leu93–Leu113, Ile115–Trp135, Val155–Trp175, Leu213–Pro233, Val249–Ala269, and Ile284–Asp304.

It belongs to the binding-protein-dependent transport system permease family. AraH/RbsC subfamily. In terms of assembly, the complex is composed of two ATP-binding proteins (LsrA), two transmembrane proteins (LsrC and LsrD) and a solute-binding protein (LsrB).

It localises to the cell inner membrane. In terms of biological role, part of the ABC transporter complex LsrABCD involved in autoinducer 2 (AI-2) import. Probably responsible for the translocation of the substrate across the membrane. This Salmonella choleraesuis (strain SC-B67) protein is Autoinducer 2 import system permease protein LsrC (lsrC).